Reading from the N-terminus, the 643-residue chain is 1-deoxy-D-xylulose-5-phosphate synthase (643 aa).

Residues His-71 and 112 to 114 (SHA) contribute to the thiamine diphosphate site. Asp-144 is a Mg(2+) binding site. Residues 145–146 (GA), Asn-173, Tyr-284, and Glu-365 each bind thiamine diphosphate. Asn-173 is a binding site for Mg(2+).

The protein belongs to the transketolase family. DXPS subfamily. As to quaternary structure, homodimer. The cofactor is Mg(2+). Thiamine diphosphate serves as cofactor.

It catalyses the reaction D-glyceraldehyde 3-phosphate + pyruvate + H(+) = 1-deoxy-D-xylulose 5-phosphate + CO2. It functions in the pathway metabolic intermediate biosynthesis; 1-deoxy-D-xylulose 5-phosphate biosynthesis; 1-deoxy-D-xylulose 5-phosphate from D-glyceraldehyde 3-phosphate and pyruvate: step 1/1. Its function is as follows. Catalyzes the acyloin condensation reaction between C atoms 2 and 3 of pyruvate and glyceraldehyde 3-phosphate to yield 1-deoxy-D-xylulose-5-phosphate (DXP). This chain is 1-deoxy-D-xylulose-5-phosphate synthase, found in Mycobacterium leprae (strain Br4923).